The sequence spans 272 residues: Putative G-protein coupled receptor GPR32P1 (272 aa).

Positions 1–24 (MNGVSEGTRGCSDRQPGALTQGHS) are disordered. Residues 1-46 (MNGVSEGTRGCSDRQPGALTQGHSCSRKMNASRCLSEEVGSLRPLT) are Extracellular-facing. An N-linked (GlcNAc...) asparagine glycan is attached at N30. A helical transmembrane segment spans residues 47–67 (MAVLSASFVVGVLGNGLVPWV). Residues 68 to 78 (TVFRMARTVST) are Cytoplasmic-facing. The helical transmembrane segment at 79–99 (VCFFHLALADFMLSLSLPILV) threads the bilayer. Topologically, residues 100–116 (YYIVSRQWLLGEWACKL) are extracellular. The cysteines at positions 114 and 191 are disulfide-linked. A helical transmembrane segment spans residues 117–137 (YTGFVFLTFSTSNCLLVLISV). Residues 138 to 158 (DRCISVLYPVWALNHRTEQRA) are Cytoplasmic-facing. Residues 159 to 179 (SWLAFGVWLLAAALCSAHLKF) form a helical membrane-spanning segment. Residues 180-213 (RTTRKWNGCMQCYLQFNLENETAQMWTQEVFGRQ) lie on the Extracellular side of the membrane. The N-linked (GlcNAc...) asparagine glycan is linked to N199. Residues 214 to 234 (MAVIMAHFLLGFLGPLAIIGT) form a helical membrane-spanning segment. Residues 235-272 (CAHLIRAKLLREGWVHANRPKRLLLVLVSALSAGSHLT) are Cytoplasmic-facing.

Belongs to the G-protein coupled receptor 1 family.

The protein localises to the cell membrane. Orphan receptor. The chain is Putative G-protein coupled receptor GPR32P1 (GPR32P1) from Homo sapiens (Human).